We begin with the raw amino-acid sequence, 269 residues long: Interleukin-1 beta (269 aa).

A propeptide spanning residues M1 to D112 is cleaved from the precursor.

It belongs to the IL-1 family. As to quaternary structure, monomer. In its precursor form, weakly interacts with full-length MEFV; the mature cytokine does not interact at all. Interacts with integrins ITGAV:ITGBV and ITGA5:ITGB1; integrin-binding is required for IL1B signaling. Interacts with cargo receptor TMED10; the interaction is direct and is required for the secretion of IL1B mature form. Interacts with HSP90AB1; the interaction facilitates cargo translocation into the ERGIC. Interacts with HSP90B1; the interaction facilitates cargo translocation into the ERGIC.

The protein localises to the cytoplasm. It localises to the cytosol. The protein resides in the secreted. It is found in the lysosome. Its subcellular location is the extracellular exosome. Functionally, potent pro-inflammatory cytokine. Initially discovered as the major endogenous pyrogen, induces prostaglandin synthesis, neutrophil influx and activation, T-cell activation and cytokine production, B-cell activation and antibody production, and fibroblast proliferation and collagen production. Promotes Th17 differentiation of T-cells. Synergizes with IL12/interleukin-12 to induce IFNG synthesis from T-helper 1 (Th1) cells. Plays a role in angiogenesis by inducing VEGF production synergistically with TNF and IL6. Involved in transduction of inflammation downstream of pyroptosis: its mature form is specifically released in the extracellular milieu by passing through the gasdermin-D (GSDMD) pore. The chain is Interleukin-1 beta (IL1B) from Trichosurus vulpecula (Brush-tailed possum).